The following is a 557-amino-acid chain: NAC domain-containing protein 17 (557 aa).

Residues 16-166 (SAPGFRFHPT…YYALYKLFKK (151 aa)) form the NAC domain. The DNA-binding element occupies 115–172 (VGLKKTLVFYRGRAPSGERTDWVMHEYTMDEDELGRCKNPQEYYALYKLFKKSGAGPK). The helical transmembrane segment at 526–546 (FLLLSIVGALCAIFWVLVATV) threads the bilayer.

As to expression, expressed in roots, rosette leaves, cauline leaves, shoot apex, stems and flowers.

It localises to the endoplasmic reticulum membrane. The protein localises to the nucleus. In terms of biological role, transcriptional activator activated by proteolytic cleavage through regulated intramembrane proteolysis (RIP). Transcriptional activator that acts as a positive regulator of AOX1A during mitochondrial dysfunction. Binds directly to AOX1A promoter. Mediates mitochondrial retrograde signaling. The polypeptide is NAC domain-containing protein 17 (Arabidopsis thaliana (Mouse-ear cress)).